The sequence spans 1267 residues: DNA-directed RNA polymerase subunit beta'' (1267 aa).

Zn(2+) contacts are provided by C222, C290, C297, and C300.

The protein belongs to the RNA polymerase beta' chain family. RpoC2 subfamily. As to quaternary structure, in plastids the minimal PEP RNA polymerase catalytic core is composed of four subunits: alpha, beta, beta', and beta''. When a (nuclear-encoded) sigma factor is associated with the core the holoenzyme is formed, which can initiate transcription. It depends on Zn(2+) as a cofactor.

The protein localises to the plastid. The protein resides in the chloroplast. It catalyses the reaction RNA(n) + a ribonucleoside 5'-triphosphate = RNA(n+1) + diphosphate. Functionally, DNA-dependent RNA polymerase catalyzes the transcription of DNA into RNA using the four ribonucleoside triphosphates as substrates. The protein is DNA-directed RNA polymerase subunit beta'' of Emiliania huxleyi (Coccolithophore).